The primary structure comprises 1443 residues: Cleavage and polyadenylation specificity factor subunit 1 (1443 aa).

Disordered stretches follow at residues 404–435, 546–570, 715–777, and 901–921; these read PASA…AAGK, EEDN…DDGR, GGAR…PAPF, and FREK…AEEG. The span at 410 to 419 shows a compositional bias: basic and acidic residues; that stretch reads EAADKEEPPS. 2 positions are modified to phosphoserine: S756 and S766. The span at 758–775 shows a compositional bias: basic and acidic residues; that stretch reads SKEEARRSSQPPADRDPA. Residues 893-908 carry the Nuclear localization signal motif; it reads KKVPHNINFREKKPKP.

It belongs to the CPSF1 family. Component of the cleavage and polyadenylation specificity factor (CPSF) complex, composed of CPSF1, CPSF2, CPSF3, CPSF4 and FIP1L1. Found in a complex with CPSF1, FIP1L1 and PAPOLA. Interacts with FIP1L1, TENT2/GLD2 and SRRM1. Interacts with TUT1; the interaction is direct and mediates the recruitment of the CPSF complex on the 3'UTR of selected pre-mRNAs. Post-translationally, the N-terminus is blocked. As to expression, widely expressed, with high expression in the retina.

The protein resides in the nucleus. It is found in the nucleoplasm. In terms of biological role, component of the cleavage and polyadenylation specificity factor (CPSF) complex that plays a key role in pre-mRNA 3'-end formation, recognizing the AAUAAA signal sequence and interacting with poly(A) polymerase and other factors to bring about cleavage and poly(A) addition. This subunit is involved in the RNA recognition step of the polyadenylation reaction. May play a role in eye morphogenesis and the development of retinal ganglion cell projections to the midbrain. This Homo sapiens (Human) protein is Cleavage and polyadenylation specificity factor subunit 1 (CPSF1).